Reading from the N-terminus, the 55-residue chain is MCKLCQTKKVIVEHTGIGVVFHPCPNCRSGTDLTPVIQKLEQMLTAGKARLNIYD.

This is an uncharacterized protein from Bacillus subtilis (strain 168).